The sequence spans 428 residues: Enolase (428 aa).

Q163 lines the (2R)-2-phosphoglycerate pocket. E205 functions as the Proton donor in the catalytic mechanism. 3 residues coordinate Mg(2+): D242, E285, and D312. (2R)-2-phosphoglycerate is bound by residues K337, R366, S367, and K388. The active-site Proton acceptor is the K337.

Belongs to the enolase family. The cofactor is Mg(2+).

Its subcellular location is the cytoplasm. It is found in the secreted. The protein resides in the cell surface. It catalyses the reaction (2R)-2-phosphoglycerate = phosphoenolpyruvate + H2O. Its pathway is carbohydrate degradation; glycolysis; pyruvate from D-glyceraldehyde 3-phosphate: step 4/5. In terms of biological role, catalyzes the reversible conversion of 2-phosphoglycerate (2-PG) into phosphoenolpyruvate (PEP). It is essential for the degradation of carbohydrates via glycolysis. In Finegoldia magna (strain ATCC 29328 / DSM 20472 / WAL 2508) (Peptostreptococcus magnus), this protein is Enolase.